A 1211-amino-acid chain; its full sequence is Homeodomain-interacting protein kinase 1 (1211 aa).

Lys-25 participates in a covalent cross-link: Glycyl lysine isopeptide (Lys-Gly) (interchain with G-Cter in SUMO); alternate. Lys-25 participates in a covalent cross-link: Glycyl lysine isopeptide (Lys-Gly) (interchain with G-Cter in SUMO2); alternate. Residues Lys-120 and Lys-124 each participate in a glycyl lysine isopeptide (Lys-Gly) (interchain with G-Cter in SUMO2) cross-link. Positions 190-518 (YEVLEFLGRG…PLKTLNHQFV (329 aa)) constitute a Protein kinase domain. ATP contacts are provided by residues 196–204 (LGRGTFGQV) and Lys-219. Asp-315 serves as the catalytic Proton acceptor. The disordered stretch occupies residues 835–856 (QQQSSSLPSRKNKQSAPVSSTS). The Nuclear localization signal 1 (NLS1) motif lies at 844–847 (RKNK). Ser-872 carries the phosphoserine modification. The tract at residues 885 to 1094 (PVQDQHQPII…FQHGSPLHST (210 aa)) is interaction with TP53. The required for localization to nuclear speckles stretch occupies residues 891–998 (QPIIIPDTPS…PLKTQLGDCT (108 aa)). An SUMO interaction motifs (SIM); required for nuclear localization and kinase activity region spans residues 902 to 926 (PVSVITIRSDTDEEEDNKFKPSSSS). Residue Lys-991 forms a Glycyl lysine isopeptide (Lys-Gly) (interchain with G-Cter in SUMO2) linkage. Disordered stretches follow at residues 1002–1023 (QASG…GQSS), 1047–1070 (LSQN…APRR), and 1085–1105 (FQHG…APAH). 2 stretches are compositionally biased toward low complexity: residues 1048–1064 (SQNQ…ERSS) and 1096–1105 (HPHLAPAPAH). Position 1201 is a phosphoserine (Ser-1201). A Glycyl lysine isopeptide (Lys-Gly) (interchain with G-Cter in SUMO) cross-link involves residue Lys-1204.

This sequence belongs to the protein kinase superfamily. CMGC Ser/Thr protein kinase family. HIPK subfamily. Interacts with Nkx1-2, Nkx2-5, MYB, PARK7, DAXX and p53/TP53. Part of a cytoplasmic complex made of HIPK1, DAB2IP and MAP3K5 in response to TNF. This complex formation promotes MAP3K5-JNK activation and subsequent apoptosis. Phosphorylated and activated by JNK1. Autophosphorylated. Post-translationally, sumoylated. When conjugated it is directed to nuclear speckles. SENP1-mediated desumoylation is mediated by TNF in response to stress stimuli, triggering transient translocation from nucleus to cytoplasm.

Its subcellular location is the nucleus. The protein localises to the cytoplasm. It is found in the nucleus speckle. The enzyme catalyses L-seryl-[protein] + ATP = O-phospho-L-seryl-[protein] + ADP + H(+). It carries out the reaction L-threonyl-[protein] + ATP = O-phospho-L-threonyl-[protein] + ADP + H(+). Its function is as follows. Serine/threonine-protein kinase involved in transcription regulation and TNF-mediated cellular apoptosis. Plays a role as a corepressor for homeodomain transcription factors. Phosphorylates DAXX and MYB. Phosphorylates DAXX in response to stress, and mediates its translocation from the nucleus to the cytoplasm. Inactivates MYB transcription factor activity by phosphorylation. Prevents MAP3K5-JNK activation in the absence of TNF. TNF triggers its translocation to the cytoplasm in response to stress stimuli, thus activating nuclear MAP3K5-JNK by derepression and promoting apoptosis. May be involved in anti-oxidative stress responses. Involved in the regulation of eye size, lens formation and retinal lamination during late embryogenesis. Promotes angiogenesis and to be involved in erythroid differentiation. May be involved in malignant squamous cell tumor formation. Phosphorylates PAGE4 at 'Thr-51' which is critical for the ability of PAGE4 to potentiate the transcriptional activator activity of JUN. This Rattus norvegicus (Rat) protein is Homeodomain-interacting protein kinase 1.